Consider the following 420-residue polypeptide: Glutamyl-tRNA reductase (420 aa).

Residues 49–52, serine 109, 114–116, and glutamine 120 contribute to the substrate site; these read TCNR and EPQ. The active-site Nucleophile is the cysteine 50. Residue 189–194 coordinates NADP(+); sequence GAGETI.

The protein belongs to the glutamyl-tRNA reductase family. Homodimer.

The enzyme catalyses (S)-4-amino-5-oxopentanoate + tRNA(Glu) + NADP(+) = L-glutamyl-tRNA(Glu) + NADPH + H(+). It participates in porphyrin-containing compound metabolism; protoporphyrin-IX biosynthesis; 5-aminolevulinate from L-glutamyl-tRNA(Glu): step 1/2. Functionally, catalyzes the NADPH-dependent reduction of glutamyl-tRNA(Glu) to glutamate 1-semialdehyde (GSA). This chain is Glutamyl-tRNA reductase, found in Sodalis glossinidius (strain morsitans).